Reading from the N-terminus, the 328-residue chain is UPF0421 protein SERP1427 (328 aa).

4 consecutive transmembrane segments (helical) span residues Leu-26–Ile-46, Leu-61–Gln-81, Ala-109–Phe-129, and Leu-132–Pro-152.

Belongs to the UPF0421 family.

The protein resides in the cell membrane. The sequence is that of UPF0421 protein SERP1427 from Staphylococcus epidermidis (strain ATCC 35984 / DSM 28319 / BCRC 17069 / CCUG 31568 / BM 3577 / RP62A).